The primary structure comprises 442 residues: Envelope glycoprotein D (442 aa).

Residues 1–19 (MPAVLLVLYVNPPPSVCIL) form the signal peptide. Residues 20 to 405 (TQKLSLGLYN…NSTFVGISVG (386 aa)) are Virion surface-facing. N-linked (GlcNAc...) asparagine; by host glycans are attached at residues asparagine 103 and asparagine 111. Disulfide bonds link cysteine 138–cysteine 259, cysteine 176–cysteine 273, and cysteine 188–cysteine 197. A disordered region spans residues 331-364 (PDNHPGFDSVESEITQNKTDPKPGQADPKPNQPF). N-linked (GlcNAc...) asparagine; by host glycosylation is found at asparagine 347 and asparagine 396. Residues 406 to 422 (LGIAGLVLVGVILYVCL) form a helical membrane-spanning segment. Residues 423–442 (RRKKELKVCTERLDSPTLDL) are Intravirion-facing.

The protein belongs to the herpesviridae glycoprotein D family.

The protein resides in the virion membrane. In terms of biological role, envelope glycoprotein that binds to host cell entry receptors, promoting the virus entry into host cells. May trigger fusion with host membrane, by recruiting the fusion machinery composed of gB and gH/gL. The chain is Envelope glycoprotein D (gD) from Equine herpesvirus 1 (strain Kentucky A) (EHV-1).